The following is a 387-amino-acid chain: Odorant receptor 19a (387 aa).

Residues Met1–Tyr40 lie on the Cytoplasmic side of the membrane. The chain crosses the membrane as a helical span at residues Ser41–Leu61. Residues Gln62–Glu71 are Extracellular-facing. The helical transmembrane segment at Ser72 to Met92 threads the bilayer. Residues Arg93–Glu127 are Cytoplasmic-facing. The helical transmembrane segment at Phe128 to Ile148 threads the bilayer. Topologically, residues Ser149–Ser171 are extracellular. Residues Ala172–Leu192 traverse the membrane as a helical segment. Topologically, residues Asn193–Ser254 are cytoplasmic. Residues Leu255–Tyr275 traverse the membrane as a helical segment. Over Phe276–Met285 the chain is Extracellular. Residues Arg286–Tyr306 form a helical membrane-spanning segment. At Thr307–Arg336 the chain is on the cytoplasmic side. Residues Leu337–Val357 form a helical membrane-spanning segment. The Extracellular segment spans residues Pro358–Glu387.

This sequence belongs to the insect chemoreceptor superfamily. Heteromeric odorant receptor channel (TC 1.A.69) family. Or2a subfamily. In terms of assembly, interacts with Orco. Complexes exist early in the endomembrane system in olfactory sensory neurons (OSNs), coupling these complexes to the conserved ciliary trafficking pathway. As to expression, expressed in ai2A olfactory sensory neurons in the antenna.

Its subcellular location is the cell membrane. Odorant receptor which mediates acceptance or avoidance behavior, depending on its substrates. The odorant receptor repertoire encodes a large collection of odor stimuli that vary widely in identity, intensity, and duration. May form a complex with Orco to form odorant-sensing units, providing sensitive and prolonged odorant signaling and calcium permeability. Involved in the preference for citrus fruits for oviposition, especially through the response to valencene, the primary ligand of Or19a. Larvae growing on citrus fruits suffer a reduced risk of parasitism since endoparasitoid wasps that parasitize larvae are strongly repelled by the smell of citrus, as well as by valencene. This is Odorant receptor 19a (Or19a) from Drosophila melanogaster (Fruit fly).